A 279-amino-acid polypeptide reads, in one-letter code: Prephenate dehydratase (279 aa).

Residues 2-178 (KIAYLGPRGS…NSTRFWLLGK (177 aa)) form the Prephenate dehydratase domain. One can recognise an ACT domain in the interval 194–272 (LALTLPDNLP…VNVRLLGNYS (79 aa)).

It carries out the reaction prephenate + H(+) = 3-phenylpyruvate + CO2 + H2O. It participates in amino-acid biosynthesis; L-phenylalanine biosynthesis; phenylpyruvate from prephenate: step 1/1. This Lactococcus lactis subsp. cremoris (strain MG1363) protein is Prephenate dehydratase (pheA).